Consider the following 216-residue polypeptide: Thymidine kinase (216 aa).

ATP contacts are provided by residues 9-16 (GTMDCGKS) and 86-89 (DEAQ). Glu-87 functions as the Proton acceptor in the catalytic mechanism.

Belongs to the thymidine kinase family. As to quaternary structure, homotetramer.

It localises to the cytoplasm. It catalyses the reaction thymidine + ATP = dTMP + ADP + H(+). The polypeptide is Thymidine kinase (Streptomyces coelicolor (strain ATCC BAA-471 / A3(2) / M145)).